Consider the following 225-residue polypeptide: MNPLAPVLTIDGPSGAGKGTISRIIARRMGWHYLDSGALYRAVGVAASWADIDTSDASALVRCTFDTHVQFVEQGESMRVMVNGTDATDELRLETTGALASAIAAIPEVRAALKERQRAFRELPGLVADGRDMGTVIFKDAPYKVFLTASAEERAERRHKQLKDKGVSVNFDDLLREIMARDARDAQRTVAPLKPADDAVLIDTTGIGIDDVVARVMDLLPVPAA.

Residue 12-20 (GPSGAGKGT) coordinates ATP.

The protein belongs to the cytidylate kinase family. Type 1 subfamily.

It localises to the cytoplasm. It catalyses the reaction CMP + ATP = CDP + ADP. The enzyme catalyses dCMP + ATP = dCDP + ADP. In Stenotrophomonas maltophilia (strain K279a), this protein is Cytidylate kinase.